A 264-amino-acid polypeptide reads, in one-letter code: Putative hydro-lyase Bpet2233 (264 aa).

This sequence belongs to the D-glutamate cyclase family.

This Bordetella petrii (strain ATCC BAA-461 / DSM 12804 / CCUG 43448) protein is Putative hydro-lyase Bpet2233.